Consider the following 207-residue polypeptide: MSHGPLRVGIGGPVGAGKTTLTEKLCAALAHRCSMAVITNDIYTREDAEALMRAQVLPAERIRGVETGGCPHTAIREDASINLAAVADLRRTFPDLDLILIESGGDNLAATFSPELADLTIYVIDTAAGQDIPRKRGPGLARSDLLVVNKIDLAPHVGVNLARLEADTQAARGQRPYVMARMRAGVGVEAIVAFLEREGGLLLLPQD.

Residue 12 to 19 (GPVGAGKT) coordinates GTP.

Belongs to the SIMIBI class G3E GTPase family. UreG subfamily. As to quaternary structure, homodimer. UreD, UreF and UreG form a complex that acts as a GTP-hydrolysis-dependent molecular chaperone, activating the urease apoprotein by helping to assemble the nickel containing metallocenter of UreC. The UreE protein probably delivers the nickel.

It is found in the cytoplasm. Functionally, facilitates the functional incorporation of the urease nickel metallocenter. This process requires GTP hydrolysis, probably effectuated by UreG. The chain is Urease accessory protein UreG from Cereibacter sphaeroides (strain KD131 / KCTC 12085) (Rhodobacter sphaeroides).